Reading from the N-terminus, the 565-residue chain is Sulfite reductase [NADPH] hemoprotein beta-component (565 aa).

[4Fe-4S] cluster is bound by residues Cys429, Cys435, Cys474, and Cys478. Siroheme is bound at residue Cys478.

The protein belongs to the nitrite and sulfite reductase 4Fe-4S domain family. In terms of assembly, alpha(8)-beta(8). The alpha component is a flavoprotein, the beta component is a hemoprotein. The cofactor is siroheme. [4Fe-4S] cluster serves as cofactor.

The enzyme catalyses hydrogen sulfide + 3 NADP(+) + 3 H2O = sulfite + 3 NADPH + 4 H(+). It functions in the pathway sulfur metabolism; hydrogen sulfide biosynthesis; hydrogen sulfide from sulfite (NADPH route): step 1/1. Functionally, component of the sulfite reductase complex that catalyzes the 6-electron reduction of sulfite to sulfide. This is one of several activities required for the biosynthesis of L-cysteine from sulfate. This Shewanella piezotolerans (strain WP3 / JCM 13877) protein is Sulfite reductase [NADPH] hemoprotein beta-component.